Consider the following 182-residue polypeptide: Hypoxanthine/guanine phosphoribosyltransferase (182 aa).

It belongs to the purine/pyrimidine phosphoribosyltransferase family. Archaeal HPRT subfamily. Homodimer.

It localises to the cytoplasm. The catalysed reaction is IMP + diphosphate = hypoxanthine + 5-phospho-alpha-D-ribose 1-diphosphate. It catalyses the reaction GMP + diphosphate = guanine + 5-phospho-alpha-D-ribose 1-diphosphate. The protein operates within purine metabolism; IMP biosynthesis via salvage pathway; IMP from hypoxanthine: step 1/1. Catalyzes a salvage reaction resulting in the formation of IMP that is energically less costly than de novo synthesis. This is Hypoxanthine/guanine phosphoribosyltransferase from Methanosphaerula palustris (strain ATCC BAA-1556 / DSM 19958 / E1-9c).